A 370-amino-acid polypeptide reads, in one-letter code: Cytochrome b (370 aa).

The next 4 helical transmembrane spans lie at 25–45, 69–90, 105–125, and 170–190; these read FGSM…FLAI, WIMQ…YTHI, WLSG…GYVL, and FFAL…IHIV. 2 residues coordinate heme b: H75 and H89. 2 residues coordinate heme b: H174 and H188. Position 193 (H193) interacts with a ubiquinone. The next 4 helical transmembrane spans lie at 218–238, 280–300, 312–332, and 339–358; these read YKDM…MSFM, LGGT…PFTH, LTQI…WTAT, and FITI…IINP.

Belongs to the cytochrome b family. In terms of assembly, the cytochrome bc1 complex contains 3 respiratory subunits (MT-CYB, CYC1 and UQCRFS1), 2 core proteins (UQCRC1 and UQCRC2) and probably 6 low-molecular weight proteins. It depends on heme b as a cofactor.

It is found in the mitochondrion inner membrane. In terms of biological role, component of the ubiquinol-cytochrome c reductase complex (complex III or cytochrome b-c1 complex) that is part of the mitochondrial respiratory chain. The b-c1 complex mediates electron transfer from ubiquinol to cytochrome c. Contributes to the generation of a proton gradient across the mitochondrial membrane that is then used for ATP synthesis. In Micropechis ikaheca (New Guinean small-eyed snake), this protein is Cytochrome b (MT-CYB).